A 258-amino-acid chain; its full sequence is Regulatory protein RecX (258 aa).

Belongs to the RecX family.

It is found in the cytoplasm. Its function is as follows. Modulates RecA activity. The chain is Regulatory protein RecX from Streptococcus pyogenes serotype M5 (strain Manfredo).